A 461-amino-acid polypeptide reads, in one-letter code: tRNA modification GTPase MnmE (461 aa).

The (6S)-5-formyl-5,6,7,8-tetrahydrofolate site is built by Arg27, Glu89, and Arg128. The TrmE-type G domain maps to 224-382; sequence GLKTAIVGRP…LEALIKKLFF (159 aa). Asn234 contributes to the K(+) binding site. GTP contacts are provided by residues 234-239, 253-259, and 278-281; these read NVGKSS, TDVAGTT, and DTAG. Ser238 contributes to the Mg(2+) binding site. Thr253, Val255, and Thr258 together coordinate K(+). Thr259 lines the Mg(2+) pocket. Lys461 serves as a coordination point for (6S)-5-formyl-5,6,7,8-tetrahydrofolate.

This sequence belongs to the TRAFAC class TrmE-Era-EngA-EngB-Septin-like GTPase superfamily. TrmE GTPase family. As to quaternary structure, homodimer. Heterotetramer of two MnmE and two MnmG subunits. Requires K(+) as cofactor.

The protein resides in the cytoplasm. Its function is as follows. Exhibits a very high intrinsic GTPase hydrolysis rate. Involved in the addition of a carboxymethylaminomethyl (cmnm) group at the wobble position (U34) of certain tRNAs, forming tRNA-cmnm(5)s(2)U34. The protein is tRNA modification GTPase MnmE of Lactobacillus delbrueckii subsp. bulgaricus (strain ATCC BAA-365 / Lb-18).